We begin with the raw amino-acid sequence, 197 residues long: Orotate phosphoribosyltransferase (197 aa).

5-phospho-alpha-D-ribose 1-diphosphate-binding positions include Arg87, Lys91, His93, and 112-120; that span reads DDVATTGGS. Orotate-binding residues include Thr116 and Arg144.

Belongs to the purine/pyrimidine phosphoribosyltransferase family. PyrE subfamily. As to quaternary structure, homodimer. Mg(2+) serves as cofactor.

The enzyme catalyses orotidine 5'-phosphate + diphosphate = orotate + 5-phospho-alpha-D-ribose 1-diphosphate. It participates in pyrimidine metabolism; UMP biosynthesis via de novo pathway; UMP from orotate: step 1/2. Its function is as follows. Catalyzes the transfer of a ribosyl phosphate group from 5-phosphoribose 1-diphosphate to orotate, leading to the formation of orotidine monophosphate (OMP). The polypeptide is Orotate phosphoribosyltransferase (Sulfolobus acidocaldarius (strain ATCC 33909 / DSM 639 / JCM 8929 / NBRC 15157 / NCIMB 11770)).